Consider the following 179-residue polypeptide: ATP synthase subunit b (179 aa).

Residues 13–33 (IHIDELVFGLIAFAVIFALVY) traverse the membrane as a helical segment.

This sequence belongs to the ATPase B chain family. F-type ATPases have 2 components, F(1) - the catalytic core - and F(0) - the membrane proton channel. F(1) has five subunits: alpha(3), beta(3), gamma(1), delta(1), epsilon(1). F(0) has three main subunits: a(1), b(2) and c(10-14). The alpha and beta chains form an alternating ring which encloses part of the gamma chain. F(1) is attached to F(0) by a central stalk formed by the gamma and epsilon chains, while a peripheral stalk is formed by the delta and b chains.

The protein resides in the cell membrane. Functionally, f(1)F(0) ATP synthase produces ATP from ADP in the presence of a proton or sodium gradient. F-type ATPases consist of two structural domains, F(1) containing the extramembraneous catalytic core and F(0) containing the membrane proton channel, linked together by a central stalk and a peripheral stalk. During catalysis, ATP synthesis in the catalytic domain of F(1) is coupled via a rotary mechanism of the central stalk subunits to proton translocation. In terms of biological role, component of the F(0) channel, it forms part of the peripheral stalk, linking F(1) to F(0). This is ATP synthase subunit b from Thermobifida fusca (strain YX).